The following is a 148-amino-acid chain: Deoxyuridine 5'-triphosphate nucleotidohydrolase (148 aa).

Substrate is bound by residues 68 to 70 (RSG), N81, and 85 to 87 (TID).

It belongs to the dUTPase family. It depends on Mg(2+) as a cofactor.

The catalysed reaction is dUTP + H2O = dUMP + diphosphate + H(+). The protein operates within pyrimidine metabolism; dUMP biosynthesis; dUMP from dCTP (dUTP route): step 2/2. Its function is as follows. This enzyme is involved in nucleotide metabolism: it produces dUMP, the immediate precursor of thymidine nucleotides and it decreases the intracellular concentration of dUTP so that uracil cannot be incorporated into DNA. In Geobacter metallireducens (strain ATCC 53774 / DSM 7210 / GS-15), this protein is Deoxyuridine 5'-triphosphate nucleotidohydrolase.